A 128-amino-acid polypeptide reads, in one-letter code: S-adenosylmethionine decarboxylase proenzyme (128 aa).

Serine 63 serves as the catalytic Schiff-base intermediate with substrate; via pyruvic acid. Serine 63 bears the Pyruvic acid (Ser); by autocatalysis mark. Histidine 68 acts as the Proton acceptor; for processing activity in catalysis. The active-site Proton donor; for catalytic activity is cysteine 83.

The protein belongs to the prokaryotic AdoMetDC family. Type 1 subfamily. As to quaternary structure, heterotetramer of two alpha and two beta chains arranged as a dimer of alpha/beta heterodimers. It depends on pyruvate as a cofactor. In terms of processing, is synthesized initially as an inactive proenzyme. Formation of the active enzyme involves a self-maturation process in which the active site pyruvoyl group is generated from an internal serine residue via an autocatalytic post-translational modification. Two non-identical subunits are generated from the proenzyme in this reaction, and the pyruvate is formed at the N-terminus of the alpha chain, which is derived from the carboxyl end of the proenzyme. The post-translation cleavage follows an unusual pathway, termed non-hydrolytic serinolysis, in which the side chain hydroxyl group of the serine supplies its oxygen atom to form the C-terminus of the beta chain, while the remainder of the serine residue undergoes an oxidative deamination to produce ammonia and the pyruvoyl group blocking the N-terminus of the alpha chain.

It carries out the reaction S-adenosyl-L-methionine + H(+) = S-adenosyl 3-(methylsulfanyl)propylamine + CO2. It participates in amine and polyamine biosynthesis; S-adenosylmethioninamine biosynthesis; S-adenosylmethioninamine from S-adenosyl-L-methionine: step 1/1. Catalyzes the decarboxylation of S-adenosylmethionine to S-adenosylmethioninamine (dcAdoMet), the propylamine donor required for the synthesis of the polyamines spermine and spermidine from the diamine putrescine. The polypeptide is S-adenosylmethionine decarboxylase proenzyme (Leptospira borgpetersenii serovar Hardjo-bovis (strain JB197)).